Reading from the N-terminus, the 541-residue chain is Calcium-dependent protein kinase 9 (541 aa).

The disordered stretch occupies residues 1 to 75 (MGNCFAKNHG…PGLSPKTTTK (75 aa)). The N-myristoyl glycine moiety is linked to residue Gly-2. Polar residues predominate over residues 14-54 (PQQNGNTTRSVEVGVTNQDPPSYTPQARTTQQPEKPGSVNS). Ser-69 bears the Phosphoserine mark. The region spanning 91–349 (YTLGKELGRG…AADVLQHPWL (259 aa)) is the Protein kinase domain. ATP is bound by residues 97–105 (LGRGQFGVT) and Lys-120. Catalysis depends on Asp-215, which acts as the Proton acceptor. Ser-255 is modified (phosphoserine). Residues 355-385 (ASDKPIDSAVLSRMKQFRAMNKLKKLALKVI) form an autoinhibitory domain region. 4 EF-hand domains span residues 392 to 427 (EEIQ…LGSK), 428 to 463 (LTEA…RHRL), 464 to 499 (ESNE…YGMG), and 500 to 534 (DDAT…GNPQ). Ca(2+) is bound by residues Asp-405, Asp-407, Ser-409, Thr-411, Glu-416, Asp-441, Asp-443, Asn-445, Ser-447, Glu-452, Asp-477, Asp-479, Ser-481, Tyr-483, Glu-488, Asp-512, Asp-514, Asp-516, Arg-518, and Glu-523.

Belongs to the protein kinase superfamily. Ser/Thr protein kinase family. CDPK subfamily.

The protein localises to the cell membrane. The enzyme catalyses L-seryl-[protein] + ATP = O-phospho-L-seryl-[protein] + ADP + H(+). The catalysed reaction is L-threonyl-[protein] + ATP = O-phospho-L-threonyl-[protein] + ADP + H(+). With respect to regulation, activated by calcium. Autophosphorylation may play an important role in the regulation of the kinase activity. In terms of biological role, may play a role in signal transduction pathways that involve calcium as a second messenger. The sequence is that of Calcium-dependent protein kinase 9 (CPK9) from Arabidopsis thaliana (Mouse-ear cress).